Here is a 263-residue protein sequence, read N- to C-terminus: UPF0739 protein C1orf74 homolog (263 aa).

This sequence belongs to the UPF0739 family.

This chain is UPF0739 protein C1orf74 homolog, found in Mus musculus (Mouse).